The following is a 355-amino-acid chain: UDP-N-acetylglucosamine--N-acetylmuramyl-(pentapeptide) pyrophosphoryl-undecaprenol N-acetylglucosamine transferase (355 aa).

Residues 15 to 17, N127, R163, S191, I244, 263 to 268, and Q288 each bind UDP-N-acetyl-alpha-D-glucosamine; these read TGG and ALTVSE.

This sequence belongs to the glycosyltransferase 28 family. MurG subfamily.

The protein localises to the cell inner membrane. The catalysed reaction is di-trans,octa-cis-undecaprenyl diphospho-N-acetyl-alpha-D-muramoyl-L-alanyl-D-glutamyl-meso-2,6-diaminopimeloyl-D-alanyl-D-alanine + UDP-N-acetyl-alpha-D-glucosamine = di-trans,octa-cis-undecaprenyl diphospho-[N-acetyl-alpha-D-glucosaminyl-(1-&gt;4)]-N-acetyl-alpha-D-muramoyl-L-alanyl-D-glutamyl-meso-2,6-diaminopimeloyl-D-alanyl-D-alanine + UDP + H(+). Its pathway is cell wall biogenesis; peptidoglycan biosynthesis. Its function is as follows. Cell wall formation. Catalyzes the transfer of a GlcNAc subunit on undecaprenyl-pyrophosphoryl-MurNAc-pentapeptide (lipid intermediate I) to form undecaprenyl-pyrophosphoryl-MurNAc-(pentapeptide)GlcNAc (lipid intermediate II). This Salmonella newport (strain SL254) protein is UDP-N-acetylglucosamine--N-acetylmuramyl-(pentapeptide) pyrophosphoryl-undecaprenol N-acetylglucosamine transferase.